The sequence spans 1405 residues: DNA-directed RNA polymerase subunit beta' (1405 aa).

Zn(2+) is bound by residues Cys-70, Cys-72, Cys-85, and Cys-88. 3 residues coordinate Mg(2+): Asp-460, Asp-462, and Asp-464. 4 residues coordinate Zn(2+): Cys-815, Cys-890, Cys-897, and Cys-900.

This sequence belongs to the RNA polymerase beta' chain family. In terms of assembly, the RNAP catalytic core consists of 2 alpha, 1 beta, 1 beta' and 1 omega subunit. When a sigma factor is associated with the core the holoenzyme is formed, which can initiate transcription. It depends on Mg(2+) as a cofactor. Zn(2+) is required as a cofactor.

It catalyses the reaction RNA(n) + a ribonucleoside 5'-triphosphate = RNA(n+1) + diphosphate. DNA-dependent RNA polymerase catalyzes the transcription of DNA into RNA using the four ribonucleoside triphosphates as substrates. In Xanthomonas campestris pv. campestris (strain 8004), this protein is DNA-directed RNA polymerase subunit beta'.